We begin with the raw amino-acid sequence, 460 residues long: Cysteine proteinase 7 (460 aa).

The N-terminal stretch at 1-17 (MKVLSALCVLLVSVATA) is a signal peptide. A propeptide spans 18 to 111 (KQQLSEVEYR…TESDKIFDAS (94 aa)) (activation peptide). 2 cysteine pairs are disulfide-bonded: C131/C176 and C167/C210. C134 is a catalytic residue. N226 and N252 each carry an N-linked (GlcNAc...) asparagine glycan. C268 and C445 are joined by a disulfide. The active site involves H275. The interval 285-409 (GSGSSGSHGG…GSSSGSNSNG (125 aa)) is disordered. Residues 294–359 (GSQSQSAGSD…QSGSQSGNSG (66 aa)) show a composition bias toward low complexity. Residues 367-385 (AGSGSGSGSGSGSGSGSGS) are compositionally biased toward gly residues. The span at 386–409 (VSGSASGSASGSASGSSSGSNSNG) shows a compositional bias: low complexity. Residue N423 is part of the active site.

The protein belongs to the peptidase C1 family. Post-translationally, glycosylated; contains GlcNAc-alpha-1-P-Ser residues. Also N-glycosylated.

The protein localises to the lysosome. This is Cysteine proteinase 7 (cprG) from Dictyostelium discoideum (Social amoeba).